The primary structure comprises 194 residues: Phosphoheptose isomerase (194 aa).

One can recognise an SIS domain in the interval 37–194; that stretch reads ISNSFKQGGK…LIEFEMAKQA (158 aa). 52-54 contacts substrate; the sequence is NGG. H61 and E65 together coordinate Zn(2+). Residues E65, 93-94, 119-121, S124, and Q172 contribute to the substrate site; these read ND and STS. Residues Q172 and H180 each contribute to the Zn(2+) site.

Belongs to the SIS family. GmhA subfamily. Homotetramer. It depends on Zn(2+) as a cofactor.

It is found in the cytoplasm. The enzyme catalyses 2 D-sedoheptulose 7-phosphate = D-glycero-alpha-D-manno-heptose 7-phosphate + D-glycero-beta-D-manno-heptose 7-phosphate. Its pathway is carbohydrate biosynthesis; D-glycero-D-manno-heptose 7-phosphate biosynthesis; D-glycero-alpha-D-manno-heptose 7-phosphate and D-glycero-beta-D-manno-heptose 7-phosphate from sedoheptulose 7-phosphate: step 1/1. In terms of biological role, catalyzes the isomerization of sedoheptulose 7-phosphate in D-glycero-D-manno-heptose 7-phosphate. This chain is Phosphoheptose isomerase, found in Haemophilus influenzae (strain PittGG).